A 152-amino-acid chain; its full sequence is Nucleoside diphosphate kinase (152 aa).

The ATP site is built by lysine 11, phenylalanine 59, arginine 87, threonine 93, arginine 104, and asparagine 114. The active-site Pros-phosphohistidine intermediate is the histidine 117.

The protein belongs to the NDK family. In terms of assembly, homotetramer. Mg(2+) serves as cofactor.

It localises to the cytoplasm. It catalyses the reaction a 2'-deoxyribonucleoside 5'-diphosphate + ATP = a 2'-deoxyribonucleoside 5'-triphosphate + ADP. The enzyme catalyses a ribonucleoside 5'-diphosphate + ATP = a ribonucleoside 5'-triphosphate + ADP. Major role in the synthesis of nucleoside triphosphates other than ATP. The ATP gamma phosphate is transferred to the NDP beta phosphate via a ping-pong mechanism, using a phosphorylated active-site intermediate. This Prochlorococcus marinus (strain AS9601) protein is Nucleoside diphosphate kinase.